The chain runs to 322 residues: Methionyl-tRNA formyltransferase (322 aa).

(6S)-5,6,7,8-tetrahydrofolate is bound at residue 112 to 115 (SLLP).

It belongs to the Fmt family.

It catalyses the reaction L-methionyl-tRNA(fMet) + (6R)-10-formyltetrahydrofolate = N-formyl-L-methionyl-tRNA(fMet) + (6S)-5,6,7,8-tetrahydrofolate + H(+). Attaches a formyl group to the free amino group of methionyl-tRNA(fMet). The formyl group appears to play a dual role in the initiator identity of N-formylmethionyl-tRNA by promoting its recognition by IF2 and preventing the misappropriation of this tRNA by the elongation apparatus. The protein is Methionyl-tRNA formyltransferase of Synechococcus sp. (strain JA-2-3B'a(2-13)) (Cyanobacteria bacterium Yellowstone B-Prime).